The sequence spans 617 residues: Protein fem-1 homolog C (617 aa).

At M1 the chain carries N-acetylmethionine. 7 ANK repeats span residues 2-31 (DLKT…KAEV), 40-70 (NGAT…SIEV), 82-111 (EGAP…SVNN), 115-144 (TNST…DLEV), 148-177 (HGHT…DVNR), 181-210 (KGNT…KMEK), and 213-242 (YGMT…TSKT). 2 TPR repeats span residues 245 to 279 (INAL…RYSD) and 338 to 371 (SYYI…QQSN). ANK repeat units lie at residues 481 to 523 (NNFS…DVNV) and 527 to 556 (DDNS…HFDA).

This sequence belongs to the fem-1 family. In terms of assembly, component of a Cul2-RING (CRL2) E3 ubiquitin-protein ligase complex, also named ECS (Elongin BC-CUL2/5-SOCS-box protein) complex, composed of CUL2, Elongin BC (ELOB and ELOC), RBX1 and substrate-specific adapter FEM1C. As to expression, widely expressed. Expressed at higher level in testis.

It participates in protein modification; protein ubiquitination. Functionally, substrate-recognition component of a Cul2-RING (CRL2) E3 ubiquitin-protein ligase complex of the DesCEND (destruction via C-end degrons) pathway, which recognizes a C-degron located at the extreme C terminus of target proteins, leading to their ubiquitination and degradation. The C-degron recognized by the DesCEND pathway is usually a motif of less than ten residues and can be present in full-length proteins, truncated proteins or proteolytically cleaved forms. The CRL2(FEM1C) complex specifically recognizes proteins with an arginine at the C-terminus: recognizes and binds proteins ending with -Lys/Arg-Xaa-Arg and -Lys/Arg-Xaa-Xaa-Arg C-degrons, such as SIL1 or OR51B2, leading to their ubiquitination and degradation. The CRL2(FEM1C) complex mediates ubiquitination and degradation of truncated MSRB1/SEPX1 selenoproteins produced by failed UGA/Sec decoding. Promotes ubiquitination and degradation of SLBP. The polypeptide is Protein fem-1 homolog C (Mus musculus (Mouse)).